Consider the following 796-residue polypeptide: Nuclear GTPase SLIP-GC (796 aa).

Positions 1–22 (MAETKDVFGQEPHPVEDDLYKE) are enriched in basic and acidic residues. A disordered region spans residues 1–35 (MAETKDVFGQEPHPVEDDLYKERTRKRRKSDRDQR). 107-114 (GSTGAGKS) serves as a coordination point for GTP. Coiled-coil stretches lie at residues 158–185 (SDQE…EEAD) and 745–775 (KELA…RLRK).

As to expression, expressed in germinal center B-cell and in lymphomas derived from germinal center B-cell.

The protein localises to the nucleus speckle. Its function is as follows. Nuclear GTPase found in germinal center B-cells, where it may inhibit function of the activation-induced cytidine deaminase AICDA. Reduces somatic hypermutation in B-cells which may enhance genome stability. The protein is Nuclear GTPase SLIP-GC (NUGGC) of Homo sapiens (Human).